The following is a 196-amino-acid chain: Sulfur-rich protein (196 aa).

Helical transmembrane passes span 34-54 (VTAGLQAITSSPGMVNLLIGW), 76-96 (ITLLVLGILLVVAGLACMFIF), and 105-125 (FWLIIPAAIGLIKLLVTSLCF).

Its subcellular location is the membrane. The protein is Sulfur-rich protein (srp) of Chlamydia pneumoniae (Chlamydophila pneumoniae).